The sequence spans 385 residues: Acyl-CoA dehydrogenase IpdE1 (385 aa).

FAD-binding positions include Gln-126 to Ser-129 and Ser-161. The active-site Proton acceptor is the Glu-244. Ser-364–Glu-366 contacts FAD.

It belongs to the acyl-CoA dehydrogenase family. Heterotetramer composed of 2 IpdE1 subunits and 2 IpdE2 subunits. The cofactor is FAD.

The enzyme catalyses 3-[(3aS,4S,5R,7aS)-5-hydroxy-7a-methyl-1-oxo-octahydro-1H-inden-4-yl]propanoyl-CoA + A = (2E)-3-[(3aS,4S,5R,7aS)-5-hydroxy-7a-methyl-1-oxo-octahydro-1H-inden-4-yl]prop-2-enoyl-CoA + AH2. It participates in steroid metabolism; cholesterol degradation. Functionally, involved in cholesterol degradation. Catalyzes the dehydrogenation of 5OH-HIP-CoA to 5OH-HIPE-CoA. Can also use octanoyl-CoA and dihydroferuloyl-CoA, with lower efficiency. Cannot use 3-oxo-4-pregnene-20-carboxyl-CoA (3-OPC-CoA). The chain is Acyl-CoA dehydrogenase IpdE1 from Mycobacterium tuberculosis (strain ATCC 25618 / H37Rv).